Reading from the N-terminus, the 320-residue chain is Aminoacyl tRNA synthase complex-interacting multifunctional protein 2 (320 aa).

The disordered stretch occupies residues His31–Ser51. Phosphoserine is present on Ser36. Residues Thr82–Pro162 form an interaction with PRKN region. The interaction with TP53 stretch occupies residues Pro162–His225. The region spanning Leu220–Gln317 is the GST C-terminal domain.

Part of the multisynthetase complex (MSC), a multisubunit complex that groups tRNA ligases for Arg (RARS1), Asp (DARS1), Gln (QARS1), Ile (IARS1), Leu (LARS1), Lys (KARS1), Met (MARS1) the bifunctional ligase for Glu and Pro (EPRS1) and the auxiliary subunits AIMP1/p43, AIMP2/p38 and EEF1E1/p18. Interacts (via N-terminus) with KARS1. Interacts with EPRS1. Forms a linear complex that contains MARS1, EEF1E1, EPRS1 and AIMP2 that is at the core of the multisubunit complex. Binds FUBP1 (via C-terminus). Interacts in both its unphosphorylated and phosphorylated forms with p53/TP53 (via N-terminus) in the nucleus following UV irradiation. Interacts (via N-terminus) with PRKN/parkin (via first RING-type domain). Interacts with TARS3. Phosphorylated on serine residues in response to UV irradiation. Post-translationally, ubiquitinated by PRKN, leading to its degradation by the proteasome.

It is found in the cytoplasm. The protein resides in the cytosol. It localises to the nucleus. In terms of biological role, required for assembly and stability of the aminoacyl-tRNA synthase complex. Mediates ubiquitination and degradation of FUBP1, a transcriptional activator of MYC, leading to MYC down-regulation which is required for aveolar type II cell differentiation. Blocks MDM2-mediated ubiquitination and degradation of p53/TP53. Functions as a proapoptotic factor. This Rattus norvegicus (Rat) protein is Aminoacyl tRNA synthase complex-interacting multifunctional protein 2 (Aimp2).